Reading from the N-terminus, the 256-residue chain is Imidazole glycerol phosphate synthase subunit HisF (256 aa).

Residues aspartate 12 and aspartate 131 contribute to the active site.

The protein belongs to the HisA/HisF family. Heterodimer of HisH and HisF.

It localises to the cytoplasm. The enzyme catalyses 5-[(5-phospho-1-deoxy-D-ribulos-1-ylimino)methylamino]-1-(5-phospho-beta-D-ribosyl)imidazole-4-carboxamide + L-glutamine = D-erythro-1-(imidazol-4-yl)glycerol 3-phosphate + 5-amino-1-(5-phospho-beta-D-ribosyl)imidazole-4-carboxamide + L-glutamate + H(+). It functions in the pathway amino-acid biosynthesis; L-histidine biosynthesis; L-histidine from 5-phospho-alpha-D-ribose 1-diphosphate: step 5/9. Functionally, IGPS catalyzes the conversion of PRFAR and glutamine to IGP, AICAR and glutamate. The HisF subunit catalyzes the cyclization activity that produces IGP and AICAR from PRFAR using the ammonia provided by the HisH subunit. This chain is Imidazole glycerol phosphate synthase subunit HisF, found in Bifidobacterium adolescentis (strain ATCC 15703 / DSM 20083 / NCTC 11814 / E194a).